The primary structure comprises 364 residues: Histidinol-phosphate aminotransferase (364 aa).

Lys226 carries the N6-(pyridoxal phosphate)lysine modification.

It belongs to the class-II pyridoxal-phosphate-dependent aminotransferase family. Histidinol-phosphate aminotransferase subfamily. As to quaternary structure, homodimer. Pyridoxal 5'-phosphate is required as a cofactor.

It catalyses the reaction L-histidinol phosphate + 2-oxoglutarate = 3-(imidazol-4-yl)-2-oxopropyl phosphate + L-glutamate. Its pathway is amino-acid biosynthesis; L-histidine biosynthesis; L-histidine from 5-phospho-alpha-D-ribose 1-diphosphate: step 7/9. The sequence is that of Histidinol-phosphate aminotransferase from Campylobacter jejuni subsp. jejuni serotype O:23/36 (strain 81-176).